Reading from the N-terminus, the 556-residue chain is Oxygen-dependent choline dehydrogenase (556 aa).

4–33 (DYIIIGAGSAGNVLATRLTEDPNTSVLLLE) contacts FAD. His-473 serves as the catalytic Proton acceptor.

The protein belongs to the GMC oxidoreductase family. Requires FAD as cofactor.

It carries out the reaction choline + A = betaine aldehyde + AH2. It catalyses the reaction betaine aldehyde + NAD(+) + H2O = glycine betaine + NADH + 2 H(+). It participates in amine and polyamine biosynthesis; betaine biosynthesis via choline pathway; betaine aldehyde from choline (cytochrome c reductase route): step 1/1. In terms of biological role, involved in the biosynthesis of the osmoprotectant glycine betaine. Catalyzes the oxidation of choline to betaine aldehyde and betaine aldehyde to glycine betaine at the same rate. This Escherichia coli (strain K12 / DH10B) protein is Oxygen-dependent choline dehydrogenase.